The chain runs to 189 residues: Phosphoheptose isomerase (189 aa).

Positions 34-189 (LADSLAGGRK…CDLVEKRLFP (156 aa)) constitute an SIS domain. 49-51 (NGG) serves as a coordination point for substrate. Positions 58 and 62 each coordinate Zn(2+). Substrate is bound by residues glutamate 62, 91–92 (ND), 117–119 (STS), serine 122, and glutamine 169. Positions 169 and 177 each coordinate Zn(2+).

It belongs to the SIS family. GmhA subfamily. Homotetramer. Requires Zn(2+) as cofactor.

It localises to the cytoplasm. The enzyme catalyses 2 D-sedoheptulose 7-phosphate = D-glycero-alpha-D-manno-heptose 7-phosphate + D-glycero-beta-D-manno-heptose 7-phosphate. The protein operates within carbohydrate biosynthesis; D-glycero-D-manno-heptose 7-phosphate biosynthesis; D-glycero-alpha-D-manno-heptose 7-phosphate and D-glycero-beta-D-manno-heptose 7-phosphate from sedoheptulose 7-phosphate: step 1/1. Its function is as follows. Catalyzes the isomerization of sedoheptulose 7-phosphate in D-glycero-D-manno-heptose 7-phosphate. The polypeptide is Phosphoheptose isomerase (Geobacter sulfurreducens (strain ATCC 51573 / DSM 12127 / PCA)).